The sequence spans 335 residues: Fructokinase-2 (335 aa).

It belongs to the carbohydrate kinase PfkB family. Expressed in roots, at higher levels in stems, and hardly detectable in leaves.

The catalysed reaction is D-fructose + ATP = D-fructose 6-phosphate + ADP + H(+). It participates in glycan biosynthesis; starch biosynthesis. Inhibited at high fructose. In terms of biological role, may play an important role in maintaining the flux of carbon towards starch formation. May also be involved in a sugar-sensing pathway. This is Fructokinase-2 (FRK2) from Zea mays (Maize).